The following is a 132-amino-acid chain: Large ribosomal subunit protein bL17 (132 aa).

It belongs to the bacterial ribosomal protein bL17 family. In terms of assembly, part of the 50S ribosomal subunit. Contacts protein L32.

The chain is Large ribosomal subunit protein bL17 from Leptothrix cholodnii (strain ATCC 51168 / LMG 8142 / SP-6) (Leptothrix discophora (strain SP-6)).